A 132-amino-acid polypeptide reads, in one-letter code: Small ribosomal subunit protein uS8 (132 aa).

This sequence belongs to the universal ribosomal protein uS8 family. As to quaternary structure, part of the 30S ribosomal subunit. Contacts proteins S5 and S12.

Functionally, one of the primary rRNA binding proteins, it binds directly to 16S rRNA central domain where it helps coordinate assembly of the platform of the 30S subunit. The chain is Small ribosomal subunit protein uS8 from Chelativorans sp. (strain BNC1).